The chain runs to 127 residues: UPF0166 protein PH1503 (127 aa).

The protein belongs to the UPF0166 family.

The chain is UPF0166 protein PH1503 from Pyrococcus horikoshii (strain ATCC 700860 / DSM 12428 / JCM 9974 / NBRC 100139 / OT-3).